The sequence spans 360 residues: Glutamate 5-kinase (360 aa).

Residue K11 coordinates ATP. The substrate site is built by S51, D138, and N150. Positions 278–356 (KGEIHINECA…GKKPVVHYDY (79 aa)) constitute a PUA domain.

It belongs to the glutamate 5-kinase family.

It is found in the cytoplasm. It catalyses the reaction L-glutamate + ATP = L-glutamyl 5-phosphate + ADP. It participates in amino-acid biosynthesis; L-proline biosynthesis; L-glutamate 5-semialdehyde from L-glutamate: step 1/2. Its function is as follows. Catalyzes the transfer of a phosphate group to glutamate to form L-glutamate 5-phosphate. This chain is Glutamate 5-kinase, found in Bacteroides thetaiotaomicron (strain ATCC 29148 / DSM 2079 / JCM 5827 / CCUG 10774 / NCTC 10582 / VPI-5482 / E50).